We begin with the raw amino-acid sequence, 376 residues long: MNAITSAPAAQTVHVPLGERAYDILIGPGLIARAGAEIASRLKGRKAAIITDENVAPLYLDALVASLDAAGIASAAVVLPAGEKTKSFEHLMTACDKVLEARVERNGCVIALGGGVIGDLSGFAAGIVRRGVRFVQVPTSLLAQVDSSVGGKTGINSRHGKNLIGVFHQPDLVLADTDVLNSLSEREFRAGYAEVAKYGLIDKPDFFAWLEANWKAVFTGGAARIEAIATSCQAKADVVVADERENGQRALLNLGHTFGHALEAATAYDSRRLVHGEGVSIGMVLAHEFSARMNLASPDDARRVERHLQAVGLPTRMAEIPGELPPAEVLMDAIAQDKKVKGGKLTFILTRGIGQSFVADDVPASEVISFLREKHP.

NAD(+)-binding positions include 115–119 (GVIGD), 139–140 (TS), K152, and K161. 3 residues coordinate Zn(2+): E194, H256, and H275.

The protein belongs to the sugar phosphate cyclases superfamily. Dehydroquinate synthase family. Co(2+) serves as cofactor. Zn(2+) is required as a cofactor. Requires NAD(+) as cofactor.

It localises to the cytoplasm. The enzyme catalyses 7-phospho-2-dehydro-3-deoxy-D-arabino-heptonate = 3-dehydroquinate + phosphate. Its pathway is metabolic intermediate biosynthesis; chorismate biosynthesis; chorismate from D-erythrose 4-phosphate and phosphoenolpyruvate: step 2/7. Its function is as follows. Catalyzes the conversion of 3-deoxy-D-arabino-heptulosonate 7-phosphate (DAHP) to dehydroquinate (DHQ). The sequence is that of 3-dehydroquinate synthase from Rhizobium etli (strain CIAT 652).